The following is a 383-amino-acid chain: N-acetyldiaminopimelate deacetylase (383 aa).

The active site involves Asp72. Glu131 acts as the Proton acceptor in catalysis.

Belongs to the peptidase M20A family. N-acetyldiaminopimelate deacetylase subfamily.

It catalyses the reaction N-acetyl-(2S,6S)-2,6-diaminopimelate + H2O = (2S,6S)-2,6-diaminopimelate + acetate. Its pathway is amino-acid biosynthesis; L-lysine biosynthesis via DAP pathway; LL-2,6-diaminopimelate from (S)-tetrahydrodipicolinate (acetylase route): step 3/3. Its function is as follows. Catalyzes the conversion of N-acetyl-diaminopimelate to diaminopimelate and acetate. This is N-acetyldiaminopimelate deacetylase from Lacticaseibacillus paracasei (strain ATCC 334 / BCRC 17002 / CCUG 31169 / CIP 107868 / KCTC 3260 / NRRL B-441) (Lactobacillus paracasei).